Reading from the N-terminus, the 505-residue chain is Putative pentatricopeptide repeat-containing protein At1g26500 (505 aa).

7 PPR repeats span residues 145–179 (NDKT…GYLY), 180–210 (NVET…LKEF), 214–248 (DEIT…GFDV), 249–279 (DIEA…MVSK), 285–319 (DGGF…GVYV), 320–350 (DNLT…VENP), and 351–385 (DISI…GCEP).

The protein belongs to the PPR family. P subfamily.

The sequence is that of Putative pentatricopeptide repeat-containing protein At1g26500 from Arabidopsis thaliana (Mouse-ear cress).